The sequence spans 511 residues: Synaptotagmin-6 (511 aa).

Residues 1–59 (MSGVWGAGGPRCQAALAVLASLCRARPPPLGLDVETCQSFELQPPEQSPSAADSGTSVS) lie on the Vesicular side of the membrane. The interval 12-38 (CQAALAVLASLCRARPPPLGLDVETCQ) is cysteine motif. The helical transmembrane segment at 60–80 (LLAVVVIVCGVALVAVFFFLF) threads the bilayer. At 81–511 (WKLCWMPWRN…KSFKEGTPRL (431 aa)) the chain is on the cytoplasmic side. The span at 93-103 (ASSPSSANPAS) shows a compositional bias: low complexity. 2 disordered regions span residues 93-118 (ASSP…MADK) and 157-182 (TKLQ…LPRQ). Over residues 160–172 (QRQTTEPASSTRH) the composition is skewed to polar residues. Serine 217 is modified (phosphoserine). C2 domains are found at residues 230-351 (SCGK…SIWK) and 362-495 (DLGE…AHWH). The Ca(2+) site is built by aspartate 261, aspartate 267, aspartate 319, phenylalanine 320, aspartate 321, serine 324, aspartate 327, aspartate 393, aspartate 399, aspartate 453, and aspartate 455. The necessary for cell membrane association (isoform 2) stretch occupies residues 483–511 (MLAYPRKPIAHWHCLAEVKKSFKEGTPRL).

This sequence belongs to the synaptotagmin family. In terms of assembly, isoform 1: Homodimer; disulfide-linked via the cysteine motif. Isoform 1: Can also form heterodimers with SYT3, SYT7, SYT9 and SYT10. Isoform 1: Interacts with STX1A, STX1B and STX2; the interaction is Ca(2+)-dependent. Isoform 2: Is not able to form homodimer and heterodimers. The cofactor is Ca(2+).

It is found in the cytoplasmic vesicle. The protein localises to the secretory vesicle. It localises to the synaptic vesicle membrane. Its subcellular location is the membrane. The protein resides in the cytoplasm. It is found in the cytosol. The protein localises to the cell membrane. Functionally, may be involved in Ca(2+)-dependent exocytosis of secretory vesicles through Ca(2+) and phospholipid binding to the C2 domain or may serve as Ca(2+) sensors in the process of vesicular trafficking and exocytosis. May mediate Ca(2+)-regulation of exocytosis in acrosomal reaction in sperm. The polypeptide is Synaptotagmin-6 (Syt6) (Rattus norvegicus (Rat)).